We begin with the raw amino-acid sequence, 344 residues long: Arginine N-succinyltransferase (344 aa).

Leu-125 lines the succinyl-CoA pocket. His-229 serves as the catalytic Proton donor.

This sequence belongs to the arginine N-succinyltransferase family.

It carries out the reaction succinyl-CoA + L-arginine = N(2)-succinyl-L-arginine + CoA + H(+). It participates in amino-acid degradation; L-arginine degradation via AST pathway; L-glutamate and succinate from L-arginine: step 1/5. Functionally, catalyzes the transfer of succinyl-CoA to arginine to produce N(2)-succinylarginine. In Escherichia fergusonii (strain ATCC 35469 / DSM 13698 / CCUG 18766 / IAM 14443 / JCM 21226 / LMG 7866 / NBRC 102419 / NCTC 12128 / CDC 0568-73), this protein is Arginine N-succinyltransferase.